The following is a 269-amino-acid chain: Hydroxyethylthiazole kinase (269 aa).

Residue methionine 42 coordinates substrate. Residues arginine 118 and serine 164 each contribute to the ATP site. Position 191 (glycine 191) interacts with substrate.

This sequence belongs to the Thz kinase family. Mg(2+) serves as cofactor.

The enzyme catalyses 5-(2-hydroxyethyl)-4-methylthiazole + ATP = 4-methyl-5-(2-phosphooxyethyl)-thiazole + ADP + H(+). The protein operates within cofactor biosynthesis; thiamine diphosphate biosynthesis; 4-methyl-5-(2-phosphoethyl)-thiazole from 5-(2-hydroxyethyl)-4-methylthiazole: step 1/1. Catalyzes the phosphorylation of the hydroxyl group of 4-methyl-5-beta-hydroxyethylthiazole (THZ). In Listeria monocytogenes serotype 4b (strain F2365), this protein is Hydroxyethylthiazole kinase.